The primary structure comprises 831 residues: MLDCPRLALLCALPWLLRAAVPGHRAEPLKRSAELPRNPRDPARGADFDRVYSGVVSLSTENIYSFNHTSHPGQVTAVRVHVNSSSDNLDYPVLVVVRQQKQVLSWQVPLPFQGLYQRSYNYQEVSRTLCPSKATNETGPLEQLIFVDVASMAPHGAHYKLLVTKIKHFQLRTNVAFYFTASPSQPQYFLYKFPEDVDSVIIKVVSEKAYPCSVVSVQNIMCPVYDLDHDVEFNGVYQSMTKQAAITLQKDFPDEQFFVVFVIKPEDYACGGSFSIQENENQTWNLQRSKNLKVTIVPSVKGSVYVKSSLFSVFVFLSFYLGCLLVVFVHHMRFQRKPVDGSFGSGDGSGNMAVSHPITASTPEGSNYGAIDESSSSPGRQMSSSDGGQPCHSDTDSSVEESDFDTMPDIESDKNVIRTKMFLYLSDLSRKDRRIVSKKYKIYFWNIITIAVFYALPVMQLVITYQTVVNVTGNQDICYYNFLCAHPLGVLSAFNNILSNLGHVLLGFLFLLIVLRRDLLHRRALEAKDIFAMEYGIPKHFGLFYAMGIALMMEGVLSACYHVCPNYSNFQFDTSFMYMIAGLCMLKLYQTRHPDINASAYSAYASFAVVITLTVLGVVFGKNDVWFWIIFSAIHVLASLALSTQIYYMGRFKIDVSDTDLGIFRRAAMVFYTDCIQQCSRPLYMDRMVLLIVGNLVNWSFALFGLIYRPRDFASYMLGIFICNLLLYLAFYIIMKLRSSEKVLPLPVFCIVATAVVWAAALYFFFQNLSSWEGTPAESREKNRECVLLGFFDDHDIWHFLSATALFFSFLVLLTLDDDLDVVRRDQIPVF.

The first 19 residues, 1-19 (MLDCPRLALLCALPWLLRA), serve as a signal peptide directing secretion. Residues 20 to 308 (AVPGHRAEPL…SVKGSVYVKS (289 aa)) are Extracellular-facing. Residues asparagine 67, asparagine 83, asparagine 136, and asparagine 281 are each glycosylated (N-linked (GlcNAc...) asparagine). The chain crosses the membrane as a helical span at residues 309 to 329 (SLFSVFVFLSFYLGCLLVVFV). At 330-441 (HHMRFQRKPV…DRRIVSKKYK (112 aa)) the chain is on the cytoplasmic side. The tract at residues 354–408 (VSHPITASTPEGSNYGAIDESSSSPGRQMSSSDGGQPCHSDTDSSVEESDFDTMP) is disordered. The span at 374 to 385 (SSSSPGRQMSSS) shows a compositional bias: low complexity. A compositionally biased stretch (acidic residues) spans 397-408 (SSVEESDFDTMP). The chain crosses the membrane as a helical span at residues 442 to 462 (IYFWNIITIAVFYALPVMQLV). Residues 463–493 (ITYQTVVNVTGNQDICYYNFLCAHPLGVLSA) are Extracellular-facing. Asparagine 470 carries an N-linked (GlcNAc...) asparagine glycan. The helical transmembrane segment at 494 to 514 (FNNILSNLGHVLLGFLFLLIV) threads the bilayer. The Cytoplasmic portion of the chain corresponds to 515-540 (LRRDLLHRRALEAKDIFAMEYGIPKH). The helical transmembrane segment at 541-561 (FGLFYAMGIALMMEGVLSACY) threads the bilayer. Residues 562–571 (HVCPNYSNFQ) lie on the Extracellular side of the membrane. The N-linked (GlcNAc...) asparagine glycan is linked to asparagine 566. Residues 572–589 (FDTSFMYMIAGLCMLKLY) form a helical membrane-spanning segment. Residues 590–599 (QTRHPDINAS) lie on the Cytoplasmic side of the membrane. Residues 600–620 (AYSAYASFAVVITLTVLGVVF) form a helical membrane-spanning segment. The Extracellular portion of the chain corresponds to 621–625 (GKNDV). Residues 626-646 (WFWIIFSAIHVLASLALSTQI) form a helical membrane-spanning segment. The Cytoplasmic portion of the chain corresponds to 647-687 (YYMGRFKIDVSDTDLGIFRRAAMVFYTDCIQQCSRPLYMDR). A helical membrane pass occupies residues 688–708 (MVLLIVGNLVNWSFALFGLIY). The Extracellular portion of the chain corresponds to 709 to 714 (RPRDFA). The helical transmembrane segment at 715-735 (SYMLGIFICNLLLYLAFYIIM) threads the bilayer. The Cytoplasmic portion of the chain corresponds to 736 to 745 (KLRSSEKVLP). A helical transmembrane segment spans residues 746–766 (LPVFCIVATAVVWAAALYFFF). Residues 767 to 795 (QNLSSWEGTPAESREKNRECVLLGFFDDH) lie on the Extracellular side of the membrane. N-linked (GlcNAc...) asparagine glycosylation is present at asparagine 768. A helical membrane pass occupies residues 796–816 (DIWHFLSATALFFSFLVLLTL). Residues 817-831 (DDDLDVVRRDQIPVF) lie on the Cytoplasmic side of the membrane.

The protein belongs to the SID1 family.

The protein localises to the membrane. Functionally, in vitro binds long double-stranded RNA (dsRNA) (500 and 700 base pairs), but not dsRNA shorter than 300 bp. Not involved in RNA autophagy, a process in which RNA is directly imported into lysosomes in an ATP-dependent manner, and degraded. The protein is SID1 transmembrane family member 1 (Sidt1) of Rattus norvegicus (Rat).